The chain runs to 41 residues: Large ribosomal subunit protein bL36 (41 aa).

Belongs to the bacterial ribosomal protein bL36 family.

This is Large ribosomal subunit protein bL36 from Bartonella bacilliformis (strain ATCC 35685 / KC583 / Herrer 020/F12,63).